Here is a 130-residue protein sequence, read N- to C-terminus: Small ribosomal subunit protein uS9 (130 aa).

This sequence belongs to the universal ribosomal protein uS9 family.

The sequence is that of Small ribosomal subunit protein uS9 from Burkholderia thailandensis (strain ATCC 700388 / DSM 13276 / CCUG 48851 / CIP 106301 / E264).